A 969-amino-acid chain; its full sequence is Surface protein P113 (969 aa).

The first 22 residues, 1–22, serve as a signal peptide directing secretion; that stretch reads MKIPFFILHILLLQFLLCLIRC. An N-linked (GlcNAc...) asparagine glycan is attached at Asn-207. The tract at residues 223–328 is disordered; the sequence is IGDESTDSSS…TDTLVNNKEN (106 aa). The span at 229-241 shows a compositional bias: polar residues; that stretch reads DSSSMEIQDSTSN. Residue Asn-268 is glycosylated (N-linked (GlcNAc...) asparagine). Positions 300-311 are enriched in basic and acidic residues; sequence KNEDNKDLEHGS. The segment covering 312 to 325 has biased composition (low complexity); sequence SNDVNNNTDTLVNN. Asn-317, Asn-360, Asn-661, and Asn-697 each carry an N-linked (GlcNAc...) asparagine glycan. A compositionally biased stretch (polar residues) spans 688-705; that stretch reads SSNFNIFDSNNTDQNNEQ. The segment at 688–947 is disordered; that stretch reads SSNFNIFDSN…NETNKTDNGS (260 aa). Residues 713–727 are compositionally biased toward low complexity; the sequence is QLLNNNNDDVLSESN. The span at 728–749 shows a compositional bias: basic and acidic residues; that stretch reads NENKEKTSDDATHKETQEKSDQ. N-linked (GlcNAc...) asparagine glycosylation is present at Asn-779. Over residues 798–811 the composition is skewed to acidic residues; the sequence is EGTEELQQNDEDAE. The span at 812–822 shows a compositional bias: basic and acidic residues; the sequence is SLTKENSKSEE. Over residues 823 to 841 the composition is skewed to acidic residues; sequence QENEDSTDAEAIDKEEVET. The segment covering 842–854 has biased composition (basic and acidic residues); sequence EEKGKDEQKKDEQ. A compositionally biased stretch (acidic residues) spans 855–864; the sequence is KEQDEEEDGE. Asn-876 carries an N-linked (GlcNAc...) asparagine glycan. Positions 883–896 are enriched in basic and acidic residues; that stretch reads EENKNEVKGEEHLQ. A compositionally biased stretch (low complexity) spans 897–907; that stretch reads GSEQSIEASES. Residues 908 to 917 show a composition bias toward basic and acidic residues; the sequence is SQKDETKETE. A compositionally biased stretch (acidic residues) spans 918-936; it reads DKEEYVNANDDESSEEDTT. Positions 937–947 are enriched in polar residues; it reads PNETNKTDNGS. Asn-938, Asn-941, and Asn-945 each carry an N-linked (GlcNAc...) asparagine glycan. Asn-945 is lipidated: GPI-anchor amidated asparagine. The propeptide at 946–969 is removed in mature form; that stretch reads GSSFFFAMSNALLVILLLLFIEFL.

Forms a complex composed of RH5, P113 and human BSG/basigin; the complex bridges the merozoite and host erythrocyte membranes. Within the complex, interacts with RH5 (via N-terminus); the interaction tethers RH5 to the merozoite membrane.

It is found in the cell membrane. Its function is as follows. Membrane receptor which tethers secreted RH5 to the merozoite membrane during merozoite invasion of host erythocytes. The protein is Surface protein P113 of Plasmodium falciparum (isolate 3D7).